The primary structure comprises 764 residues: 5-methyltetrahydropteroyltriglutamate--homocysteine methyltransferase (764 aa).

5-methyltetrahydropteroyltri-L-glutamate-binding positions include 16-19 and lysine 115; that span reads RELK. Residues 435–437 and glutamate 488 each bind L-homocysteine; that span reads IGS. Residues 435 to 437 and glutamate 488 contribute to the L-methionine site; that span reads IGS. Residues 519-520 and tryptophan 565 each bind 5-methyltetrahydropteroyltri-L-glutamate; that span reads RC. Residue aspartate 603 participates in L-homocysteine binding. Residue aspartate 603 coordinates L-methionine. Glutamate 609 is a 5-methyltetrahydropteroyltri-L-glutamate binding site. Zn(2+)-binding residues include histidine 645, cysteine 647, and glutamate 669. Histidine 698 functions as the Proton donor in the catalytic mechanism. Residue cysteine 730 participates in Zn(2+) binding.

It belongs to the vitamin-B12 independent methionine synthase family. Requires Zn(2+) as cofactor.

It catalyses the reaction 5-methyltetrahydropteroyltri-L-glutamate + L-homocysteine = tetrahydropteroyltri-L-glutamate + L-methionine. It functions in the pathway amino-acid biosynthesis; L-methionine biosynthesis via de novo pathway; L-methionine from L-homocysteine (MetE route): step 1/1. Its function is as follows. Catalyzes the transfer of a methyl group from 5-methyltetrahydrofolate to homocysteine resulting in methionine formation. The chain is 5-methyltetrahydropteroyltriglutamate--homocysteine methyltransferase from Burkholderia pseudomallei (strain 1106a).